The following is a 289-amino-acid chain: Phospholipase A1 (289 aa).

An N-terminal signal peptide occupies residues 1-20 (MRTGPGWLLAAAALPFFACA). The Periplasmic segment spans residues 21–52 (QEATIDKVHDTPAVRGSIIANMLQEHDNPFTL). Residues 53–65 (YPYESNYLLYTYT) traverse the membrane as a beta stranded segment. Over 66 to 84 (SDLNKKAIESYNWSDNANK) the chain is Extracellular. A beta stranded membrane pass occupies residues 85–99 (DEVKFQLSLAFPLWR). Residues 100-105 (GILGDN) are Periplasmic-facing. Residues 106-118 (SLLGASYTQRSWW) form a beta stranded membrane-spanning segment. Residues 119-128 (QLSNTGESAP) lie on the Extracellular side of the membrane. Ca(2+) is bound at residue Ser126. A beta stranded membrane pass occupies residues 129–148 (FRETNYEPQLFLGFATDYSV). The Periplasmic segment spans residues 149 to 150 (GD). Residues 151–164 (WTLRDAEFGYNHQS) traverse the membrane as a beta stranded segment. His162 acts as the Proton acceptor in catalysis. The Nucleophile role is filled by Ser164. Topologically, residues 165–173 (NGRSDPTSR) are extracellular. Positions 167 and 172 each coordinate Ca(2+). A beta stranded transmembrane segment spans residues 174–186 (SWNRLYSRLMAQN). Topologically, residues 187–188 (GN) are periplasmic. The beta stranded transmembrane segment at 189–198 (WLVEVKPWYV) threads the bilayer. Residues 199–216 (IGDTSDNKNITKYMGYYQ) lie on the Extracellular side of the membrane. Residue Asp204 coordinates Ca(2+). A beta stranded membrane pass occupies residues 217–223 (LKIGYQL). The Periplasmic segment spans residues 224–225 (GE). Residues 226 to 234 (AVLSAKGQY) traverse the membrane as a beta stranded segment. The Extracellular segment spans residues 235–241 (NWNTGYG). The beta stranded transmembrane segment at 242-250 (GAELGVSYP) threads the bilayer. At 251–255 (ITKHV) the chain is on the periplasmic side. A beta stranded transmembrane segment spans residues 256–265 (RFYTQVYSGY). At 266 to 274 (GESLIDYDF) the chain is on the extracellular side. The beta stranded transmembrane segment at 275-286 (NQTRVGMGVMLN) threads the bilayer. Residues 287–289 (DLF) are Periplasmic-facing.

It belongs to the phospholipase A1 family. Homodimer; dimerization is reversible, and the dimeric form is the active one. The cofactor is Ca(2+).

Its subcellular location is the cell outer membrane. The catalysed reaction is a 1,2-diacyl-sn-glycero-3-phosphocholine + H2O = a 2-acyl-sn-glycero-3-phosphocholine + a fatty acid + H(+). The enzyme catalyses a 1,2-diacyl-sn-glycero-3-phosphocholine + H2O = a 1-acyl-sn-glycero-3-phosphocholine + a fatty acid + H(+). Hydrolysis of phosphatidylcholine with phospholipase A2 (EC 3.1.1.4) and phospholipase A1 (EC 3.1.1.32) activities. The protein is Phospholipase A1 (pldA) of Proteus vulgaris.